We begin with the raw amino-acid sequence, 156 residues long: 3-dehydroquinate dehydratase (156 aa).

Y24 (proton acceptor) is an active-site residue. Substrate-binding residues include N76, H82, and D89. H102 functions as the Proton donor in the catalytic mechanism. Substrate-binding positions include 103–104 (IS) and R113.

The protein belongs to the type-II 3-dehydroquinase family. As to quaternary structure, homododecamer.

The catalysed reaction is 3-dehydroquinate = 3-dehydroshikimate + H2O. It participates in metabolic intermediate biosynthesis; chorismate biosynthesis; chorismate from D-erythrose 4-phosphate and phosphoenolpyruvate: step 3/7. Its function is as follows. Catalyzes a trans-dehydration via an enolate intermediate. This Nitrobacter winogradskyi (strain ATCC 25391 / DSM 10237 / CIP 104748 / NCIMB 11846 / Nb-255) protein is 3-dehydroquinate dehydratase.